Here is a 506-residue protein sequence, read N- to C-terminus: ATP synthase subunit alpha (506 aa).

Residue 169-176 (GDRQTGKT) participates in ATP binding.

The protein belongs to the ATPase alpha/beta chains family. In terms of assembly, F-type ATPases have 2 components, CF(1) - the catalytic core - and CF(0) - the membrane proton channel. CF(1) has five subunits: alpha(3), beta(3), gamma(1), delta(1), epsilon(1). CF(0) has three main subunits: a(1), b(2) and c(9-12). The alpha and beta chains form an alternating ring which encloses part of the gamma chain. CF(1) is attached to CF(0) by a central stalk formed by the gamma and epsilon chains, while a peripheral stalk is formed by the delta and b chains.

It localises to the cell membrane. It carries out the reaction ATP + H2O + 4 H(+)(in) = ADP + phosphate + 5 H(+)(out). Functionally, produces ATP from ADP in the presence of a proton gradient across the membrane. The alpha chain is a regulatory subunit. The sequence is that of ATP synthase subunit alpha from Acetivibrio thermocellus (strain ATCC 27405 / DSM 1237 / JCM 9322 / NBRC 103400 / NCIMB 10682 / NRRL B-4536 / VPI 7372) (Clostridium thermocellum).